The chain runs to 404 residues: Chorismate synthase (404 aa).

NADP(+)-binding residues include Arg-40 and Arg-46. FMN is bound by residues 133–135 (RSS), 266–267 (QA), Gly-313, 328–332 (KPIPT), and Arg-354. The tract at residues 283-320 (PGSQVHDPIEPREDGAQAYPRRTNHAGGTEGGTTTGMP) is disordered. Positions 337 to 357 (LDSVDTATGEPEPTRYERSDI) are disordered.

It belongs to the chorismate synthase family. In terms of assembly, homotetramer. Requires FMNH2 as cofactor.

It carries out the reaction 5-O-(1-carboxyvinyl)-3-phosphoshikimate = chorismate + phosphate. It functions in the pathway metabolic intermediate biosynthesis; chorismate biosynthesis; chorismate from D-erythrose 4-phosphate and phosphoenolpyruvate: step 7/7. Functionally, catalyzes the anti-1,4-elimination of the C-3 phosphate and the C-6 proR hydrogen from 5-enolpyruvylshikimate-3-phosphate (EPSP) to yield chorismate, which is the branch point compound that serves as the starting substrate for the three terminal pathways of aromatic amino acid biosynthesis. This reaction introduces a second double bond into the aromatic ring system. In Salinibacter ruber (strain DSM 13855 / M31), this protein is Chorismate synthase.